A 107-amino-acid chain; its full sequence is ATPase inhibitor, mitochondrial (107 aa).

Residues 1-25 (MAGSALAVRARLGVWGMRVLQTRGF) constitute a mitochondrion transit peptide. The tract at residues 25–58 (FGSDSSESMDSGAGSIREAGGAFGKREKAEEDRY) is disordered. An N-terminal inhibitory region region spans residues 26–52 (GSDSSESMDSGAGSIREAGGAFGKREK). Ser-39 is modified (phosphoserine). Positions 48-58 (GKREKAEEDRY) are enriched in basic and acidic residues. Residues 60-107 (REKTREQLAALKKHHEDEIDHHSKEIERLQKQIERHKKKIKYLKNSEH) are a coiled coil. The segment at 74-106 (HEDEIDHHSKEIERLQKQIERHKKKIKYLKNSE) is antiparallel alpha-helical coiled coil region. N6-succinyllysine is present on Lys-103.

Belongs to the ATPase inhibitor family. In terms of assembly, homodimer; represents the active form and is present at a pH value below 6.5. Homotetramer; represents the inactive form and is present at a pH value above 7.0.

It localises to the mitochondrion. Endogenous F(1)F(o)-ATPase inhibitor limiting ATP depletion when the mitochondrial membrane potential falls below a threshold and the F(1)F(o)-ATP synthase starts hydrolyzing ATP to pump protons out of the mitochondrial matrix. Required to avoid the consumption of cellular ATP when the F(1)F(o)-ATP synthase enzyme acts as an ATP hydrolase. Indirectly acts as a regulator of heme synthesis in erythroid tissues: regulates heme synthesis by modulating the mitochondrial pH and redox potential, allowing FECH to efficiently catalyze the incorporation of iron into protoporphyrin IX to produce heme. The polypeptide is ATPase inhibitor, mitochondrial (Rattus norvegicus (Rat)).